A 187-amino-acid chain; its full sequence is GTP cyclohydrolase 1 (187 aa).

Residues cysteine 78, histidine 81, and cysteine 149 each coordinate Zn(2+).

The protein belongs to the GTP cyclohydrolase I family. Toroid-shaped homodecamer, composed of two pentamers of five dimers.

It carries out the reaction GTP + H2O = 7,8-dihydroneopterin 3'-triphosphate + formate + H(+). It participates in cofactor biosynthesis; 7,8-dihydroneopterin triphosphate biosynthesis; 7,8-dihydroneopterin triphosphate from GTP: step 1/1. The sequence is that of GTP cyclohydrolase 1 from Wolinella succinogenes (strain ATCC 29543 / DSM 1740 / CCUG 13145 / JCM 31913 / LMG 7466 / NCTC 11488 / FDC 602W) (Vibrio succinogenes).